A 179-amino-acid polypeptide reads, in one-letter code: Peptidyl-tRNA hydrolase 2, mitochondrial (179 aa).

A helical transmembrane segment spans residues 10–32 (YLTNPGALSLAAGVACGVCLGWG). Residues K76, K81, K95, K106, K115, K171, and K177 each participate in a glycyl lysine isopeptide (Lys-Gly) (interchain with G-Cter in ubiquitin) cross-link.

This sequence belongs to the PTH2 family. Monomer. Post-translationally, ubiquitinated by PRKN during mitophagy, leading to its degradation and enhancement of mitophagy. Deubiquitinated by USP30.

The protein localises to the mitochondrion outer membrane. It catalyses the reaction an N-acyl-L-alpha-aminoacyl-tRNA + H2O = an N-acyl-L-amino acid + a tRNA + H(+). Its function is as follows. Peptidyl-tRNA hydrolase which releases tRNAs from the ribosome during protein synthesis. Promotes caspase-independent apoptosis by regulating the function of two transcriptional regulators, AES and TLE1. The protein is Peptidyl-tRNA hydrolase 2, mitochondrial (PTRH2) of Bos taurus (Bovine).